The following is a 292-amino-acid chain: GTP cyclohydrolase FolE2 (292 aa).

It belongs to the GTP cyclohydrolase IV family.

The enzyme catalyses GTP + H2O = 7,8-dihydroneopterin 3'-triphosphate + formate + H(+). It participates in cofactor biosynthesis; 7,8-dihydroneopterin triphosphate biosynthesis; 7,8-dihydroneopterin triphosphate from GTP: step 1/1. Its function is as follows. Converts GTP to 7,8-dihydroneopterin triphosphate. The protein is GTP cyclohydrolase FolE2 of Staphylococcus aureus (strain MRSA252).